We begin with the raw amino-acid sequence, 339 residues long: Ketol-acid reductoisomerase (NADP(+)) (339 aa).

In terms of domain architecture, KARI N-terminal Rossmann spans 1 to 182 (MPNRYYEKDG…GCLKAGVIDT (182 aa)). NADP(+) is bound by residues 25–28 (YGSQ), Ser51, Ser53, and 83–86 (DHIQ). His108 is an active-site residue. Gly134 is a binding site for NADP(+). The KARI C-terminal knotted domain occupies 183–328 (NFREETESDL…RELREMMTFL (146 aa)). Mg(2+)-binding residues include Asp191, Glu195, Glu227, and Glu231. Ser252 serves as a coordination point for substrate.

This sequence belongs to the ketol-acid reductoisomerase family. It depends on Mg(2+) as a cofactor.

It catalyses the reaction (2R)-2,3-dihydroxy-3-methylbutanoate + NADP(+) = (2S)-2-acetolactate + NADPH + H(+). It carries out the reaction (2R,3R)-2,3-dihydroxy-3-methylpentanoate + NADP(+) = (S)-2-ethyl-2-hydroxy-3-oxobutanoate + NADPH + H(+). Its pathway is amino-acid biosynthesis; L-isoleucine biosynthesis; L-isoleucine from 2-oxobutanoate: step 2/4. The protein operates within amino-acid biosynthesis; L-valine biosynthesis; L-valine from pyruvate: step 2/4. Involved in the biosynthesis of branched-chain amino acids (BCAA). Catalyzes an alkyl-migration followed by a ketol-acid reduction of (S)-2-acetolactate (S2AL) to yield (R)-2,3-dihydroxy-isovalerate. In the isomerase reaction, S2AL is rearranged via a Mg-dependent methyl migration to produce 3-hydroxy-3-methyl-2-ketobutyrate (HMKB). In the reductase reaction, this 2-ketoacid undergoes a metal-dependent reduction by NADPH to yield (R)-2,3-dihydroxy-isovalerate. This Solibacter usitatus (strain Ellin6076) protein is Ketol-acid reductoisomerase (NADP(+)).